A 356-amino-acid polypeptide reads, in one-letter code: Retinoic acid-induced protein 3 (356 aa).

Residues 1 to 35 are Extracellular-facing; that stretch reads MTTPTTAPSGCRSDLDSRYHRLCDLAEGWGIALET. Residues 36 to 56 form a helical membrane-spanning segment; it reads LAAVGAVATVACMFALVFLIC. At 57–68 the chain is on the cytoplasmic side; it reads KVQDSNKRKMLP. A helical transmembrane segment spans residues 69–89; the sequence is AQFLFLLGVLGVFGLTFAFII. Topologically, residues 90-101 are extracellular; sequence KLDGATGPTRFF. Residues 102-122 form a helical membrane-spanning segment; the sequence is LFGVLFAICFSCLLAHAFNLI. The Cytoplasmic portion of the chain corresponds to 123–131; that stretch reads KLVRGRKPL. The chain crosses the membrane as a helical span at residues 132 to 152; sequence SWLVILSLAVGFSLVQDVIAI. Over 153–178 the chain is Extracellular; that stretch reads EYLVLTMNRTNVNVFSELPAPRRNED. The N-linked (GlcNAc...) asparagine glycan is linked to N160. The chain crosses the membrane as a helical span at residues 179 to 199; the sequence is FVMLLIYVLVLMVLTFFTSFL. Over 200–214 the chain is Cytoplasmic; the sequence is VFCGSFSGWKRHGFH. Residues 215–235 form a helical membrane-spanning segment; it reads ICFTSFLSIAIWVAWIVLLLI. At 236–244 the chain is on the extracellular side; it reads PDIDRKWDD. The helical transmembrane segment at 245 to 265 threads the bilayer; the sequence is TILSTALVANGWVFLAFYILP. Topologically, residues 266 to 356 are cytoplasmic; sequence EFRQLPRQRS…NDYEGRKGDS (91 aa). S303 carries the phosphoserine modification. Phosphotyrosine is present on residues Y318 and Y321. Residues 336–356 form a disordered region; that stretch reads IPRAQAPASPYNDYEGRKGDS. Position 344 is a phosphoserine (S344). 2 positions are modified to phosphotyrosine: Y346 and Y349.

This sequence belongs to the G-protein coupled receptor 3 family. In terms of assembly, interacts (via its transmembrane domain) with EGFR. In terms of processing, phosphorylated in two conserved double-tyrosine motifs, Tyr 318/Tyr-321 and Tyr-346/Tyr-349 by EGFR. Tyr-318 and Tyr-321 are the preferred residues responsible for EGFR-mediated GPRC5A phosphorylation. Expressed predominantly in normal fetal and adult lung. Almost undetectable or expressed at very low levels in other tissues.

The protein resides in the cell membrane. Its function is as follows. Orphan receptor. Could be involved in modulating differentiation and maintaining homeostasis of epithelial cells. This retinoic acid-inducible GPCR provides evidence for a possible interaction between retinoid and G-protein signaling pathways. Functions as a negative modulator of EGFR signaling. Acts as a lung tumor suppressor. The chain is Retinoic acid-induced protein 3 (Gprc5a) from Mus musculus (Mouse).